Consider the following 196-residue polypeptide: uncharacterized protein (196 aa).

This is an uncharacterized protein from Sinorhizobium fredii (strain NBRC 101917 / NGR234).